The primary structure comprises 819 residues: uncharacterized protein (819 aa).

Ser-16 bears the Phosphoserine mark. Disordered stretches follow at residues 28 to 83 (SNTQ…PPTV) and 96 to 134 (PTFTLSVSPDSQSSSATHQNDYISSPHADFSFSPPASKI). Positions 36 to 63 (KIRFTENENDLSPERAQKEPVSIPHGRY) form a DNA-binding region, zn(2)-C6 fungal-type. Composition is skewed to polar residues over residues 64–77 (TWSTSPDTDSSHLP) and 96–118 (PTFTLSVSPDSQSSSATHQNDYI).

It localises to the nucleus. This is an uncharacterized protein from Schizosaccharomyces pombe (strain 972 / ATCC 24843) (Fission yeast).